The following is a 619-amino-acid chain: Dihydroxy-acid dehydratase (619 aa).

Aspartate 81 is a binding site for Mg(2+). [2Fe-2S] cluster is bound at residue cysteine 122. Aspartate 123 and lysine 124 together coordinate Mg(2+). An N6-carboxylysine modification is found at lysine 124. A [2Fe-2S] cluster-binding site is contributed by cysteine 201. Glutamate 496 serves as a coordination point for Mg(2+). Serine 522 acts as the Proton acceptor in catalysis.

Belongs to the IlvD/Edd family. Homodimer. It depends on [2Fe-2S] cluster as a cofactor. The cofactor is Mg(2+).

The catalysed reaction is (2R)-2,3-dihydroxy-3-methylbutanoate = 3-methyl-2-oxobutanoate + H2O. The enzyme catalyses (2R,3R)-2,3-dihydroxy-3-methylpentanoate = (S)-3-methyl-2-oxopentanoate + H2O. It functions in the pathway amino-acid biosynthesis; L-isoleucine biosynthesis; L-isoleucine from 2-oxobutanoate: step 3/4. Its pathway is amino-acid biosynthesis; L-valine biosynthesis; L-valine from pyruvate: step 3/4. Functionally, functions in the biosynthesis of branched-chain amino acids. Catalyzes the dehydration of (2R,3R)-2,3-dihydroxy-3-methylpentanoate (2,3-dihydroxy-3-methylvalerate) into 2-oxo-3-methylpentanoate (2-oxo-3-methylvalerate) and of (2R)-2,3-dihydroxy-3-methylbutanoate (2,3-dihydroxyisovalerate) into 2-oxo-3-methylbutanoate (2-oxoisovalerate), the penultimate precursor to L-isoleucine and L-valine, respectively. This chain is Dihydroxy-acid dehydratase, found in Burkholderia vietnamiensis (strain G4 / LMG 22486) (Burkholderia cepacia (strain R1808)).